We begin with the raw amino-acid sequence, 1666 residues long: MPPNTVNKAAEIPPFEPIAIVGIGIRGPGGINSLTTLWDTLVERKSHCFPLAKDPRFQRRFNPDDFKALFDGIPDSENVLHANLFDETPGLDRTYFSLSEREAAGMDVQQKLLLHVAHEALEDAGYSGAEDGSAFDPSTFGVYVATATDEVIQDPRDYDTDIYHLVRTERAFLSGQICFHFGLRGPSSSVDTVCSGSITAINDACRALATGDCRAAIAGGVHVVTPVSGPISFYCIKRAGFLDRTGQCKPFLQNGTGYSRSEGCGLVVMKRLSDAIREGDRIHGVIRGLCIRSMASPKFISQPNGAFQSVALAQAVKISGVDPAAISFVEAHGPGTAKGDLAEVSSLCSVLAQHRAVDNPLTVGSLKGNVGHAEAASGTHSLAKVIAMFQRRRIPPQADFHPSRLNPTLQPFFDKHPIRIIENEEDWNASHRIAVVGNFGASGNAGFMVIEEGSTFQPLEGRDVPKVSSPLPFVISAKDQATLVKLIHLYIDWLKQPSTFLTPLSDISYAMTARRFIHPFMISVQADSHMDLVQKLQERPPMINGSANRTPREVAFCFSGQGGERVDPRDSTLYNFSASFTDAVDMCFRVAESENLVAEEDVAILELFALEFGLVEMWKSWGIKPVALAGHSFGEYVALVCAGVLTVRDALKLLGIRAALIRAMCLDVPGKMAAVRLPLSDVNKCLEQQKSTRVELACVNSDNSVTVAGTPEDLESFRQELLKWYPAASWHLLNNMTAAFHSRFVQPILADFTNACNEVKVHPSEMVVLSGLLGKMCPVGDAVLQQHDYLVRHCRETNRFGTAISDYQRQNVERETPQPDWLEIGSHSRIISFITPASDQLKLPSHGKSAGEGWMTALDALMRLYSAGHVVDFKDVHYDVNPSAHHTDLPLYPFQLEPHFYPARREVKASSTMLASTNEVQFCPRVPSTELAPLLLNHVMAGYTLCPATTHVALMMAAASTFASSSQQEGRLAYKLSKLKVIAGFTNTTDGWLQVRRQSSTSDLEIISNDDNKIHITARAEVCKEQDLLESLSLYASFILPFKSFKFLPSTDVLRKELAYSLFNHTVNYGPHGQVLDRVWIAEDGYQAWGYSTYPGGASTAEGVPSALRDFSPMLIESVCQLIGFLMNTSTNRKDGEAFVTDELGDCSIAISKLYETKYVEIYASYKMVDGGTAGLGNVFAFDDKGQLISAFRDVRMAKMKIYVLKRLIDRGRKPEQVVTTQHVASTEVEEDNVAHNDIDDKVISVLKAALRLSEIPLDKTLGELGLDSLTAIDVGVQLERLVPHRRDHLTIDPEGNLTSLLQLLRPTPLPKSLPITSSTKESKVETVDLATSPSLPIMPNGVPTTVNGVPKPNALPTVNGLHKPNGAPAANGVPTANGVPTADGTSTEPSQTLVANISPEMLQAISSNPEVIQYAPGRTPLLLIHDGGGTSFAYYSLGNLDRTVIGIHCPGLQEGKGIESVHHAANEYANIARQYLKQQCPGHSKVLIGGWSLGGTISMMMAALFPDLVAGVVTIDTTPPGVVGLTAQQAESVLLHPWSRTDGIHGLVRRQLQLNTRASFAHPEYKTIIRVTAVNVPVYVLCAIDPFRPSESLDLPKETYQWLLSFKQSDVAEVTWKELIGERLLGVQSVPGNHWTMFTPANVKATTEALKQGLDVIEARLNKMG.

One can recognise a Ketosynthase family 3 (KS3) domain in the interval 15–452; sequence FEPIAIVGIG…GNAGFMVIEE (438 aa). Catalysis depends on for beta-ketoacyl synthase activity residues Cys194, His332, and His372. The segment at 555–863 is malonyl-CoA:ACP transacylase (MAT) domain; it reads AFCFSGQGGE…WMTALDALMR (309 aa). The For acyl/malonyl transferase activity role is filled by Ser632. The tract at residues 905–1034 is N-terminal hotdog fold; the sequence is REVKASSTML…EQDLLESLSL (130 aa). The PKS/mFAS DH domain maps to 905-1206; the sequence is REVKASSTML…MAKMKIYVLK (302 aa). Positions 935–1203 are product template (PT) domain; that stretch reads LLNHVMAGYT…DVRMAKMKIY (269 aa). The segment at 1050 to 1206 is C-terminal hotdog fold; the sequence is STDVLRKELA…MAKMKIYVLK (157 aa). An O-(pantetheine 4'-phosphoryl)serine modification is found at Ser1269. Positions 1331–1395 constitute a Carrier domain; it reads ATSPSLPIMP…TSTEPSQTLV (65 aa). The segment at 1334-1397 is proline-rich linker region; sequence PSLPIMPNGV…TEPSQTLVAN (64 aa). The interval 1444 to 1529 is alpha/beta hydrolase superfamily-type thioesterase (TE) domain; the sequence is TVIGIHCPGL…PPGVVGLTAQ (86 aa).

It carries out the reaction holo-[ACP] + 8 malonyl-CoA + 8 H(+) = atrochrysone carboxyl-[ACP] + 8 CO2 + 8 CoA + 2 H2O. Its pathway is secondary metabolite biosynthesis. Its function is as follows. Non-reducing polyketide synthase that synthesizes the universal anthraquinone precursor atrochrysone carboxylic acid from malonyl-CoA. Produces a mixture of both 3R and 3S enantiomers with an excess of the 3S form. PKS4 catalyzes both hepta- and octaketide synthesis and also yields 6-hydroxymusizin, probably via carboxylating activity inherent to the KS domain. In Calonarius odorifer (Mushroom), this protein is Atrochrysone carboxylic acid synthase PKS4.